A 1215-amino-acid polypeptide reads, in one-letter code: Protein benign gonial cell neoplasm (1215 aa).

Residues 407 to 439 (TGKTAVHFASELNKANHLRLLLFMGADPYIVDL) form an ANK repeat. Residue T898 is modified to Phosphothreonine.

Part of a complex composed of at least mei-P26, bam, bgcn and Sxl; this complex is involved in translational repression of nanos mRNA. Interacts with bam (via C-terminus); the interaction is direct. Interacts with mei-P26; the interaction is direct and does not require bam. Weakly interacts with wh/wuho; this interaction may be required for the function or formation of the mei-P26-bgcn-bam-Sxl complex. Part of a complex composed of at least tut, bam and bgcn; complex formation does not require RNA. Interacts with tut; the interaction is indirect and is mediated by bam. As part of the bam-bgcn-tut complex associates with twin; may recruit the CCR4-NOT1 deadenylation complex to mRNA 3'UTRs to mediate post-transcriptional regulation of expression. Expressed in testis and in 5-8 germline stem cells of ovaries, immediately adjacent to terminal filament. Expressed in ovarian germline cells throughout the germarium (at protein level).

Its function is as follows. Forms a complex with tut and bam involved in 3'UTR-dependent post-transcriptional repression of several 3'-RNA processing factors, which promotes germline stem cell lineage differentiation and mitosis-to-meiosis transition. Part of a complex with bam involved in 3'-UTR-dependent translational repression of a subset of mRNAs, including those for mei-P26, nanos and shg/E-cadherin; may act as a promiscuous RNA-binding protein tethering bam to its target mRNAs. Required for regulating the progression of gonialblast cells through transit amplification and differentiation into gametes. The sequence is that of Protein benign gonial cell neoplasm from Drosophila melanogaster (Fruit fly).